We begin with the raw amino-acid sequence, 806 residues long: WEB family protein At3g02930, chloroplastic (806 aa).

The transit peptide at Met-1 to Arg-78 directs the protein to the chloroplast. Disordered stretches follow at residues Met-1–Glu-94 and Lys-380–Lys-403. Positions Leu-9 to Leu-22 are enriched in low complexity. Residues Pro-34–Pro-59 are compositionally biased toward polar residues. 3 coiled-coil regions span residues Gln-88–Ala-530, Asp-585–Asn-662, and Glu-698–Asn-757. The span at Glu-391–Lys-403 shows a compositional bias: basic and acidic residues. 2 disordered regions span residues Glu-684–Thr-725 and Lys-746–Leu-777. Composition is skewed to basic and acidic residues over residues Asn-685–Thr-699 and Lys-706–Thr-725. Positions Val-759–Asn-769 are enriched in polar residues.

This sequence belongs to the WEB family.

It is found in the plastid. Its subcellular location is the chloroplast. This is WEB family protein At3g02930, chloroplastic from Arabidopsis thaliana (Mouse-ear cress).